Reading from the N-terminus, the 428-residue chain is Glutamate-1-semialdehyde 2,1-aminomutase (428 aa).

Residue lysine 265 is modified to N6-(pyridoxal phosphate)lysine.

It belongs to the class-III pyridoxal-phosphate-dependent aminotransferase family. HemL subfamily. In terms of assembly, homodimer. The cofactor is pyridoxal 5'-phosphate.

Its subcellular location is the cytoplasm. The catalysed reaction is (S)-4-amino-5-oxopentanoate = 5-aminolevulinate. Its pathway is porphyrin-containing compound metabolism; protoporphyrin-IX biosynthesis; 5-aminolevulinate from L-glutamyl-tRNA(Glu): step 2/2. The protein is Glutamate-1-semialdehyde 2,1-aminomutase of Aeromonas salmonicida (strain A449).